The sequence spans 199 residues: V-type ATP synthase subunit E (199 aa).

The protein belongs to the V-ATPase E subunit family.

Functionally, produces ATP from ADP in the presence of a proton gradient across the membrane. This chain is V-type ATP synthase subunit E, found in Borrelia garinii subsp. bavariensis (strain ATCC BAA-2496 / DSM 23469 / PBi) (Borreliella bavariensis).